A 637-amino-acid chain; its full sequence is Sodium-dependent proline transporter (637 aa).

Over 1–45 the chain is Cytoplasmic; it reads MKKLQEAHLRKPITPDLLMTPSDQGDVDLDVDFAADRGNWTGKLD. At threonine 20 the chain carries Phosphothreonine. Residue serine 22 is modified to Phosphoserine. 3 helical membrane-spanning segments follow: residues 46–66, 74–93, and 117–137; these read FLLS…FPYR, AFLV…LFFL, and GAGA…NMII. Topologically, residues 138-214 are extracellular; sequence AYVLFYLFAS…QGIGRPGEIR (77 aa). An N-linked (GlcNAc...) asparagine glycan is attached at asparagine 182. The next 9 helical transmembrane spans lie at 215 to 233, 242 to 259, 295 to 312, 324 to 345, 378 to 397, 425 to 443, 459 to 479, 500 to 519, and 538 to 556; these read WNLC…LCIL, VVYF…MLLV, IFYS…FASY, FIVT…FSVL, LPLS…TLGL, VFSG…ILTT, SFGL…VYGI, ACWL…YSIV, and LGIL…GMLV. Topologically, residues 557-637 are cytoplasmic; the sequence is AVLREEGSLW…IAEEEEESMM (81 aa). Residues serine 573 and serine 582 each carry the phosphoserine modification. At threonine 588 the chain carries Phosphothreonine. A Phosphotyrosine modification is found at tyrosine 591. Residues serine 598 and serine 600 each carry the phosphoserine modification.

This sequence belongs to the sodium:neurotransmitter symporter (SNF) (TC 2.A.22) family. SLC6A7 subfamily.

The protein resides in the synaptic cell membrane. It carries out the reaction L-proline(out) + chloride(out) + 2 Na(+)(out) = L-proline(in) + chloride(in) + 2 Na(+)(in). The catalysed reaction is L-pipecolate(out) + chloride(out) + 2 Na(+)(out) = L-pipecolate(in) + chloride(in) + 2 Na(+)(in). Brain specific sodium (and chloride)-dependent proline transporter. Terminates the action of proline by its high affinity sodium-dependent reuptake into presynaptic terminals. This Mus musculus (Mouse) protein is Sodium-dependent proline transporter.